The primary structure comprises 111 residues: Translation initiation factor 1A 1 (111 aa).

The tract at residues 1–26 is disordered; that stretch reads MTLADLKKPTSRATPSTEETFTRVRT. The S1-like domain maps to 22–96; the sequence is TRVRTPRREN…EKADVIWKYT (75 aa).

Belongs to the eIF-1A family.

In terms of biological role, seems to be required for maximal rate of protein biosynthesis. Enhances ribosome dissociation into subunits and stabilizes the binding of the initiator Met-tRNA(I) to 40 S ribosomal subunits. This Methanosarcina acetivorans (strain ATCC 35395 / DSM 2834 / JCM 12185 / C2A) protein is Translation initiation factor 1A 1 (eIF1A1).